Reading from the N-terminus, the 134-residue chain is Putative esterase PA0474 (134 aa).

Belongs to the thioesterase PaaI family.

The chain is Putative esterase PA0474 from Pseudomonas aeruginosa (strain ATCC 15692 / DSM 22644 / CIP 104116 / JCM 14847 / LMG 12228 / 1C / PRS 101 / PAO1).